Consider the following 115-residue polypeptide: Ribonuclease P protein component (115 aa).

The protein belongs to the RnpA family. As to quaternary structure, consists of a catalytic RNA component (M1 or rnpB) and a protein subunit.

The enzyme catalyses Endonucleolytic cleavage of RNA, removing 5'-extranucleotides from tRNA precursor.. Its function is as follows. RNaseP catalyzes the removal of the 5'-leader sequence from pre-tRNA to produce the mature 5'-terminus. It can also cleave other RNA substrates such as 4.5S RNA. The protein component plays an auxiliary but essential role in vivo by binding to the 5'-leader sequence and broadening the substrate specificity of the ribozyme. The polypeptide is Ribonuclease P protein component (Bacillus cereus (strain AH187)).